Reading from the N-terminus, the 600-residue chain is DNA mismatch repair protein MutL (600 aa).

The segment at 327–405 (DGSRAATTGA…FSPQPAAAEP (79 aa)) is disordered. The span at 349–367 (PNSQRPQTAWSAETSSSRP) shows a compositional bias: polar residues.

Belongs to the DNA mismatch repair MutL/HexB family.

Functionally, this protein is involved in the repair of mismatches in DNA. It is required for dam-dependent methyl-directed DNA mismatch repair. May act as a 'molecular matchmaker', a protein that promotes the formation of a stable complex between two or more DNA-binding proteins in an ATP-dependent manner without itself being part of a final effector complex. This chain is DNA mismatch repair protein MutL, found in Rhizobium johnstonii (strain DSM 114642 / LMG 32736 / 3841) (Rhizobium leguminosarum bv. viciae).